Reading from the N-terminus, the 499-residue chain is Probable dipeptidase B (499 aa).

Cys-26 is a catalytic residue.

The protein belongs to the peptidase C69 family.

It catalyses the reaction an L-aminoacyl-L-amino acid + H2O = 2 an L-alpha-amino acid. The protein is Probable dipeptidase B (pepDB) of Streptococcus pyogenes serotype M3 (strain ATCC BAA-595 / MGAS315).